A 251-amino-acid chain; its full sequence is Triosephosphate isomerase (251 aa).

9 to 11 (NWK) lines the substrate pocket. Histidine 95 serves as the catalytic Electrophile. Glutamate 167 functions as the Proton acceptor in the catalytic mechanism. Residues glycine 173, serine 213, and 234–235 (GG) each bind substrate.

It belongs to the triosephosphate isomerase family. As to quaternary structure, homodimer.

The protein localises to the cytoplasm. The catalysed reaction is D-glyceraldehyde 3-phosphate = dihydroxyacetone phosphate. Its pathway is carbohydrate biosynthesis; gluconeogenesis. It functions in the pathway carbohydrate degradation; glycolysis; D-glyceraldehyde 3-phosphate from glycerone phosphate: step 1/1. Involved in the gluconeogenesis. Catalyzes stereospecifically the conversion of dihydroxyacetone phosphate (DHAP) to D-glyceraldehyde-3-phosphate (G3P). This is Triosephosphate isomerase from Geobacter metallireducens (strain ATCC 53774 / DSM 7210 / GS-15).